The chain runs to 23 residues: Coenzyme PQQ synthesis protein A (23 aa).

A cross-link (pyrroloquinoline quinone (Glu-Tyr)) is located at residues 15–19 (EVTLY).

It belongs to the PqqA family.

It participates in cofactor biosynthesis; pyrroloquinoline quinone biosynthesis. Functionally, required for coenzyme pyrroloquinoline quinone (PQQ) biosynthesis. PQQ is probably formed by cross-linking a specific glutamate to a specific tyrosine residue and excising these residues from the peptide. The polypeptide is Coenzyme PQQ synthesis protein A (Colwellia psychrerythraea (strain 34H / ATCC BAA-681) (Vibrio psychroerythus)).